We begin with the raw amino-acid sequence, 54 residues long: Putative neurotoxin-I (54 aa).

Disulfide bonds link cysteine 20–cysteine 42, cysteine 28–cysteine 51, and cysteine 32–cysteine 53.

In terms of tissue distribution, expressed by the venom gland.

The protein resides in the secreted. The polypeptide is Putative neurotoxin-I (Lychas mucronatus (Chinese swimming scorpion)).